A 619-amino-acid chain; its full sequence is Mitochondrial Rho GTPase 1-A (619 aa).

Over 1-593 the chain is Cytoplasmic; that stretch reads MRKDVRILLV…TQADLKNSTF (593 aa). Residues 2-168 form the Miro 1 domain; sequence RKDVRILLVG…FYYAQKAVLH (167 aa). GTP is bound by residues K14, G16, K17, T18, and S19. T18 serves as a coordination point for Mg(2+). Positions 35 and 57 each coordinate Mg(2+). S59, N118, K119, D121, A149, and K150 together coordinate GTP. 2 consecutive EF-hand domains span residues 184–219 and 304–339; these read SCIK…CFNI and NAYL…FPYM. Ca(2+) is bound by residues D197, D199, D201, E208, D317, D319, D321, A323, and E328. The Miro 2 domain occupies 416 to 580; sequence RSVFRCNVLG…YTKLTTMAMY (165 aa). Positions 427, 429, 430, 431, 432, 433, 447, 529, 531, 559, and 560 each coordinate GTP. R427 serves as a coordination point for Mg(2+). A helical; Anchor for type IV membrane protein membrane pass occupies residues 594-616; the sequence is WLRASVGATVFAVLGFAMYKALL. Residues 617 to 619 are Mitochondrial intermembrane-facing; it reads KQR.

Belongs to the mitochondrial Rho GTPase family. In terms of assembly, homodimer.

It is found in the mitochondrion outer membrane. The enzyme catalyses GTP + H2O = GDP + phosphate + H(+). It catalyses the reaction ATP + H2O = ADP + phosphate + H(+). It carries out the reaction UTP + H2O = UDP + phosphate + H(+). In terms of biological role, atypical mitochondrial nucleoside-triphosphatase (NTPase) involved in mitochondrial trafficking. Probably involved in control of anterograde transport of mitochondria and their subcellular distribution. Can hydrolyze GTP, ATP and UTP. The polypeptide is Mitochondrial Rho GTPase 1-A (rhot1a) (Danio rerio (Zebrafish)).